We begin with the raw amino-acid sequence, 319 residues long: RNA polymerase II holoenzyme cyclin-like subunit (319 aa).

The 90-residue stretch at 53-142 (QQLIRLAKRL…LGECEFFMIS (90 aa)) folds into the Cyclin N-terminal domain. A compositionally biased stretch (low complexity) spans 237 to 251 (QGQQAQGGMPEPAAA). Positions 237–261 (QGQQAQGGMPEPAAAEPKEKRQQDR) are disordered. Residues 252 to 261 (EPKEKRQQDR) show a composition bias toward basic and acidic residues.

Belongs to the cyclin family. Cyclin C subfamily. As to quaternary structure, component of the SRB8-11 complex, a regulatory module of the Mediator complex. Interacts with SSN3/FCK1.

It is found in the nucleus. Component of the SRB8-11 complex. The SRB8-11 complex is a regulatory module of the Mediator complex which is itself involved in regulation of basal and activated RNA polymerase II-dependent transcription. The SRB8-11 complex may be involved in the transcriptional repression of a subset of genes regulated by Mediator. It may inhibit the association of the Mediator complex with RNA polymerase II to form the holoenzyme complex. The SRB8-11 complex phosphorylates the C-terminal domain (CTD) of the largest subunit of RNA polymerase II. May play a role in signal transduction pathways regulating secondary metabolism and fungal development (conidiation). This is RNA polymerase II holoenzyme cyclin-like subunit (SSN8) from Gibberella moniliformis (Maize ear and stalk rot fungus).